The following is a 190-amino-acid chain: Voltage-dependent calcium channel gamma-like subunit (190 aa).

4 helical membrane-spanning segments follow: residues 25–45 (FIRT…SVSI), 96–116 (ALAV…QLCE), 131–151 (LLVS…LLRN), and 155–175 (LIGF…LFLN).

This sequence belongs to the PMP-22/EMP/MP20 family. CACNG subfamily. The L-type calcium channel is composed of five subunits: alpha-1, alpha-2/delta, beta and gamma.

It is found in the membrane. Its function is as follows. Thought to stabilize the calcium channel in an inactivated (closed) state. Modulates calcium current when coexpressed with CACNA1G. The sequence is that of Voltage-dependent calcium channel gamma-like subunit from Homo sapiens (Human).